We begin with the raw amino-acid sequence, 133 residues long: MRHRKSGRQLNRNSSHRKAMFSNMAGSLVKHEIIKTTLPKAKELRRVIEPLITLAKTDSVANRRLAFARTRDNEVVGKLFSEIGPRNADRPGGYTRILKCGFRTGDNAPMAYIELVGRPATSEAVQEDAQSAE.

It belongs to the bacterial ribosomal protein bL17 family. As to quaternary structure, part of the 50S ribosomal subunit. Contacts protein L32.

The sequence is that of Large ribosomal subunit protein bL17 from Pseudoalteromonas translucida (strain TAC 125).